The following is a 267-amino-acid chain: Tryptophan synthase alpha chain (267 aa).

Catalysis depends on proton acceptor residues E49 and D60.

This sequence belongs to the TrpA family. As to quaternary structure, tetramer of two alpha and two beta chains.

The enzyme catalyses (1S,2R)-1-C-(indol-3-yl)glycerol 3-phosphate + L-serine = D-glyceraldehyde 3-phosphate + L-tryptophan + H2O. It functions in the pathway amino-acid biosynthesis; L-tryptophan biosynthesis; L-tryptophan from chorismate: step 5/5. Its function is as follows. The alpha subunit is responsible for the aldol cleavage of indoleglycerol phosphate to indole and glyceraldehyde 3-phosphate. This Salinispora tropica (strain ATCC BAA-916 / DSM 44818 / JCM 13857 / NBRC 105044 / CNB-440) protein is Tryptophan synthase alpha chain.